A 352-amino-acid polypeptide reads, in one-letter code: Secretion system apparatus protein SsaU (352 aa).

The next 4 membrane-spanning stretches (helical) occupy residues 34-54 (LIALYLYFHFFTEKMILILIE), 89-109 (LGAGVIVATVGSVFLQVGVVI), 144-164 (LKVIMLSLIFAFFFYYYASTF), and 176-196 (VLVVSSLIKWLWVGVMVFYIV).

It belongs to the type III secretion exporter family.

Its subcellular location is the cell membrane. Its function is as follows. Part of a type III secretion system. This chain is Secretion system apparatus protein SsaU (ssaU), found in Salmonella typhimurium (strain LT2 / SGSC1412 / ATCC 700720).